Reading from the N-terminus, the 533-residue chain is Peptide chain release factor 3 (533 aa).

Positions 10–278 (EKRRTFAIIS…TFVEIAPPPQ (269 aa)) constitute a tr-type G domain. Residues 19–26 (SHPDAGKT), 87–91 (DTPGH), and 141–144 (NKMD) contribute to the GTP site.

The protein belongs to the TRAFAC class translation factor GTPase superfamily. Classic translation factor GTPase family. PrfC subfamily.

It localises to the cytoplasm. In terms of biological role, increases the formation of ribosomal termination complexes and stimulates activities of RF-1 and RF-2. It binds guanine nucleotides and has strong preference for UGA stop codons. It may interact directly with the ribosome. The stimulation of RF-1 and RF-2 is significantly reduced by GTP and GDP, but not by GMP. This chain is Peptide chain release factor 3, found in Salinibacter ruber (strain DSM 13855 / M31).